Here is a 456-residue protein sequence, read N- to C-terminus: Gamma-glutamyl phosphate reductase (456 aa).

This sequence belongs to the gamma-glutamyl phosphate reductase family.

The protein localises to the cytoplasm. It catalyses the reaction L-glutamate 5-semialdehyde + phosphate + NADP(+) = L-glutamyl 5-phosphate + NADPH + H(+). It participates in amino-acid biosynthesis; L-proline biosynthesis; L-glutamate 5-semialdehyde from L-glutamate: step 2/2. Functionally, catalyzes the NADPH-dependent reduction of L-glutamate 5-phosphate into L-glutamate 5-semialdehyde and phosphate. The product spontaneously undergoes cyclization to form 1-pyrroline-5-carboxylate. The polypeptide is Gamma-glutamyl phosphate reductase (Haloquadratum walsbyi (strain DSM 16790 / HBSQ001)).